Consider the following 280-residue polypeptide: Dermonecrotic toxin LgSicTox-alphaIC1 (280 aa).

His-12 is a catalytic residue. 2 residues coordinate Mg(2+): Glu-32 and Asp-34. Catalysis depends on His-48, which acts as the Nucleophile. Cystine bridges form between Cys-52/Cys-58 and Cys-54/Cys-197. Residue Asp-92 participates in Mg(2+) binding.

This sequence belongs to the arthropod phospholipase D family. Class II subfamily. Mg(2+) serves as cofactor. Expressed by the venom gland.

The protein resides in the secreted. The catalysed reaction is an N-(acyl)-sphingosylphosphocholine = an N-(acyl)-sphingosyl-1,3-cyclic phosphate + choline. It catalyses the reaction an N-(acyl)-sphingosylphosphoethanolamine = an N-(acyl)-sphingosyl-1,3-cyclic phosphate + ethanolamine. The enzyme catalyses a 1-acyl-sn-glycero-3-phosphocholine = a 1-acyl-sn-glycero-2,3-cyclic phosphate + choline. It carries out the reaction a 1-acyl-sn-glycero-3-phosphoethanolamine = a 1-acyl-sn-glycero-2,3-cyclic phosphate + ethanolamine. Its function is as follows. Dermonecrotic toxins cleave the phosphodiester linkage between the phosphate and headgroup of certain phospholipids (sphingolipid and lysolipid substrates), forming an alcohol (often choline) and a cyclic phosphate. This toxin acts on sphingomyelin (SM) with high activity. It may also act on ceramide phosphoethanolamine (CPE), lysophosphatidylcholine (LPC) and lysophosphatidylethanolamine (LPE), but not on lysophosphatidylserine (LPS), and lysophosphatidylglycerol (LPG). It acts by transphosphatidylation, releasing exclusively cyclic phosphate products as second products. Induces platelet aggregation in platelet rich plasma, but not in washed platelet, indicating that this activity is dependent on plasma components. Also induces hemolysis. In vivo, the recombinant protein evokes an intense inflammatory reaction and dermonecrosis, similar to those induced by L.gaucho total venom. Is a good immunogen, capable of inducing immunoprotection in test animals. Functionally, anionic antimicrobial peptide that shows antimicrobial activity against Gram-negative bacteria (MIC=1.15-4.6 uM) (tested on E.coli, P.aeruginosa, and E.cloacae), but not on Gram-negative bacteria (M.luteus, S.aureus, and B.subtilis), neither on fungi and yeasts (A.niger, C.albicans and C.krusei). Does not show hemolytic effects against human erythrocytes, and has no cytotoxic effects against human cervical carcinoma cells (HeLa). The chain is Dermonecrotic toxin LgSicTox-alphaIC1 from Loxosceles gaucho (Spider).